The primary structure comprises 408 residues: 8-amino-7-oxononanoate synthase (408 aa).

R20 lines the substrate pocket. 119 to 120 (GY) serves as a coordination point for pyridoxal 5'-phosphate. H144 contributes to the substrate binding site. Positions 190, 218, and 246 each coordinate pyridoxal 5'-phosphate. K249 is modified (N6-(pyridoxal phosphate)lysine). T372 contacts substrate.

This sequence belongs to the class-II pyridoxal-phosphate-dependent aminotransferase family. BioF subfamily. Homodimer. Pyridoxal 5'-phosphate is required as a cofactor.

The catalysed reaction is 6-carboxyhexanoyl-[ACP] + L-alanine + H(+) = (8S)-8-amino-7-oxononanoate + holo-[ACP] + CO2. It participates in cofactor biosynthesis; biotin biosynthesis. Catalyzes the decarboxylative condensation of pimeloyl-[acyl-carrier protein] and L-alanine to produce 8-amino-7-oxononanoate (AON), [acyl-carrier protein], and carbon dioxide. This Leptothrix cholodnii (strain ATCC 51168 / LMG 8142 / SP-6) (Leptothrix discophora (strain SP-6)) protein is 8-amino-7-oxononanoate synthase.